A 1029-amino-acid chain; its full sequence is U2 snRNP-associated SURP motif-containing protein (1029 aa).

2 disordered regions span residues 1–110 and 141–273; these read MADK…KEDE and VNAA…DPST. Ala2 is modified (N-acetylalanine). Residues 7–16 show a composition bias toward polar residues; that stretch reads GGSQKASSKN. The segment covering 45 to 54 has biased composition (basic residues); the sequence is TRPKSPRKHN. Basic and acidic residues predominate over residues 55–64; the sequence is YRNESSRESL. At Ser67 the chain carries Phosphoserine. Residue Lys80 forms a Glycyl lysine isopeptide (Lys-Gly) (interchain with G-Cter in SUMO2) linkage. Residues 92–121 are a coiled coil; that stretch reads AKRTLSKKEQEELKKKEDEKAAAEIYEEFL. Composition is skewed to basic and acidic residues over residues 97-110 and 144-155; these read SKKE…KEDE and AKDEHETDEKRG. Residues Lys145 and Lys168 each participate in a glycyl lysine isopeptide (Lys-Gly) (interchain with G-Cter in SUMO2) cross-link. The span at 169-178 shows a compositional bias: polar residues; that stretch reads NPPNQSSNER. Residues 186–222 show a composition bias toward basic and acidic residues; the sequence is ETKKPPLKKGEKEKKKSNLELFKEELKQIQEERDERH. Residues 192–232 are a coiled coil; that stretch reads LKKGEKEKKKSNLELFKEELKQIQEERDERHKTKGRLSRFE. Phosphoserine is present on Ser202. A Glycyl lysine isopeptide (Lys-Gly) (interchain with G-Cter in SUMO2) cross-link involves residue Lys208. Ser236 carries the phosphoserine modification. Residues 239–249 are compositionally biased toward basic and acidic residues; sequence DGQRRSMDVPS. The RRM domain maps to 274–355; that stretch reads TNLYLGNINP…FEMKLGWGKA (82 aa). An SURP motif repeat occupies 430-473; it reads LIHRMIEFVVREGPMFEAMIMNREINNPMFRFLFENQTPAHVYY. Ser485 is modified (phosphoserine). The region spanning 534–679 is the CID domain; that stretch reads LKEEQRDKLE…KLQNIFLGLV (146 aa). Positions 704-729 are disordered; sequence DGAPLEDVDGIPIDATPIDDLDGVPI. Residue Thr719 is modified to Phosphothreonine. Glycyl lysine isopeptide (Lys-Gly) (interchain with G-Cter in SUMO2) cross-links involve residues Lys748 and Lys749. Position 760 is an N6-acetyllysine; alternate (Lys760). Residue Lys760 forms a Glycyl lysine isopeptide (Lys-Gly) (interchain with G-Cter in SUMO2); alternate linkage. Disordered regions lie at residues 778-841 and 855-1029; these read KWEL…EEKR and QDEL…KNKH. The span at 786–806 shows a compositional bias: acidic residues; that stretch reads EESEEEENQNQEEESEDEEDT. A phosphoserine mark is found at Ser788, Ser800, and Ser811. Basic and acidic residues-rich tracts occupy residues 810–841 and 874–922; these read KSEE…EEKR and QVEH…TPTR. Glycyl lysine isopeptide (Lys-Gly) (interchain with G-Cter in SUMO2) cross-links involve residues Lys829 and Lys832. Positions 837-915 form a coiled coil; sequence SEEKRAKLRE…ESRSKDKKEK (79 aa). Position 931 is a phosphothreonine (Thr931). Ser946 and Ser948 each carry phosphoserine. Basic and acidic residues predominate over residues 950–980; it reads KSERSERSERSHKESSRSRSSHKDSPRDASK. Residues 991-1029 are compositionally biased toward basic residues; sequence TPKRSRRSRSRSPKKSGKKSRSQSRSPHRSHKKSKKNKH.

The protein belongs to the splicing factor SR family. In terms of assembly, interacts with ERBB4.

It localises to the nucleus. This is U2 snRNP-associated SURP motif-containing protein (U2surp) from Mus musculus (Mouse).